Consider the following 292-residue polypeptide: Elongation factor Ts (292 aa).

Residues 79 to 82 form an involved in Mg(2+) ion dislocation from EF-Tu region; the sequence is TDFV.

It belongs to the EF-Ts family.

It is found in the cytoplasm. Functionally, associates with the EF-Tu.GDP complex and induces the exchange of GDP to GTP. It remains bound to the aminoacyl-tRNA.EF-Tu.GTP complex up to the GTP hydrolysis stage on the ribosome. This Xanthomonas campestris pv. campestris (strain B100) protein is Elongation factor Ts.